Consider the following 117-residue polypeptide: MARAQVLLMAAALVLMLTAAPRAAVALNCGQVDSKMKPCLTYVQGGPGPSGECCNGVRDLHNQAQSSGDRQTVCNCLKGIARGIHNLNLNNAASIPSKCNVNVPYTISPDIDCSRIY.

An N-terminal signal peptide occupies residues 1 to 26 (MARAQVLLMAAALVLMLTAAPRAAVA). 4 cysteine pairs are disulfide-bonded: C29–C76, C39–C53, C54–C99, and C74–C113. The Cis-14-hydroxy-10,13-dioxo-7-heptadecenoic acid aspartate ester moiety is linked to residue D33.

This sequence belongs to the plant LTP family. Aleurone layer of developing and germinating seeds.

Its function is as follows. Plant non-specific lipid-transfer proteins transfer phospholipids as well as galactolipids across membranes. May play a role in wax or cutin deposition in the cell walls of expanding epidermal cells and certain secretory tissues. The sequence is that of Non-specific lipid-transfer protein 1 (LTP1) from Hordeum vulgare (Barley).